A 104-amino-acid polypeptide reads, in one-letter code: Ribonuclease P protein component 4 (104 aa).

Zn(2+) is bound by residues Cys57, Cys60, Cys83, and Cys86.

Belongs to the eukaryotic/archaeal RNase P protein component 4 family. As to quaternary structure, consists of a catalytic RNA component and at least 4-5 protein subunits. It depends on Zn(2+) as a cofactor.

Its subcellular location is the cytoplasm. The catalysed reaction is Endonucleolytic cleavage of RNA, removing 5'-extranucleotides from tRNA precursor.. Functionally, part of ribonuclease P, a protein complex that generates mature tRNA molecules by cleaving their 5'-ends. The polypeptide is Ribonuclease P protein component 4 (Saccharolobus islandicus (strain M.14.25 / Kamchatka #1) (Sulfolobus islandicus)).